The chain runs to 350 residues: Tsukushi (350 aa).

The first 17 residues, 1–17, serve as a signal peptide directing secretion; sequence MAPSWLFLLFIPGMVGS. Positions 18-59 constitute an LRRNT domain; that stretch reads SRSCFPGCQCIVDNFGLFHSFSLTKVDCSGVGPHVVPVSIPL. 10 LRR repeats span residues 60-81, 86-107, 110-131, 133-154, 159-180, 183-203, 204-225, 228-250, 253-275, and 278-299; these read DTSY…VLSG, TLIN…TFSK, YLES…SFLY, RLTE…AFTL, RSMT…AERP, NIHS…LHGI, PLRH…SFLG, GLTH…SFKT, SLLD…MFFG, and SLQE…IMLN. N-linked (GlcNAc...) asparagine glycosylation is found at asparagine 75 and asparagine 91.

In terms of assembly, interacts with bmp4. Interacts with dll1 (via extracellular region). Interacts with fgf8; inhibits fgf8 signaling. Interacts with nodal2/Xnr2; enhances nodal2 activity.

The protein localises to the secreted. Its function is as follows. Contributes to various developmental events through its interactions with multiple signaling pathways. Dorsalizing factor which functions as an inhibitor of bone morphogenetic proteins (BMP) during gastrulation. Promotes dll1-dependent activation of Notch signaling and is required for neural crest formation. Induces endoderm and dorsal mesoderm formation by enhancing nodal2/Xnr2 activity while inhibiting ventrolateral mesoderm formation through inhibition of fgf8. This is Tsukushi (tsku) from Xenopus tropicalis (Western clawed frog).